The chain runs to 140 residues: Transmembrane protein 107 (140 aa).

Helical transmembrane passes span 7-27 and 53-73; these read LVPS…TLFW and LVAA…GFLS. Asparagine 79 carries N-linked (GlcNAc...) asparagine glycosylation. The next 2 membrane-spanning stretches (helical) occupy residues 83-103 and 113-133; these read SLLS…FIFE and IFAF…IAVF.

As to quaternary structure, part of the tectonic-like complex (also named B9 complex). Interacts with TMEM237, TMEM231, MKS1 and TMEM216.

The protein resides in the membrane. Its subcellular location is the cell projection. The protein localises to the cilium. Plays a role in cilia formation and embryonic patterning. Requires for normal Sonic hedgehog (Shh) signaling in the neural tube and acts in combination with GLI2 and GLI3 to pattern ventral and intermediate neuronal cell types. During ciliogenesis regulates the ciliary transition zone localization of some MKS complex proteins. The protein is Transmembrane protein 107 of Rattus norvegicus (Rat).